Here is a 162-residue protein sequence, read N- to C-terminus: 2-amino-4-hydroxy-6-hydroxymethyldihydropteridine pyrophosphokinase (162 aa).

This sequence belongs to the HPPK family.

It catalyses the reaction 6-hydroxymethyl-7,8-dihydropterin + ATP = (7,8-dihydropterin-6-yl)methyl diphosphate + AMP + H(+). It functions in the pathway cofactor biosynthesis; tetrahydrofolate biosynthesis; 2-amino-4-hydroxy-6-hydroxymethyl-7,8-dihydropteridine diphosphate from 7,8-dihydroneopterin triphosphate: step 4/4. Its function is as follows. Catalyzes the transfer of pyrophosphate from adenosine triphosphate (ATP) to 6-hydroxymethyl-7,8-dihydropterin, an enzymatic step in folate biosynthesis pathway. This Pseudomonas aeruginosa (strain ATCC 15692 / DSM 22644 / CIP 104116 / JCM 14847 / LMG 12228 / 1C / PRS 101 / PAO1) protein is 2-amino-4-hydroxy-6-hydroxymethyldihydropteridine pyrophosphokinase (folK).